The sequence spans 497 residues: Probable cytosol aminopeptidase (497 aa).

Mn(2+)-binding residues include K263 and D268. Residue K275 is part of the active site. 3 residues coordinate Mn(2+): D286, D345, and E347. The active site involves R349.

The protein belongs to the peptidase M17 family. It depends on Mn(2+) as a cofactor.

It is found in the cytoplasm. It catalyses the reaction Release of an N-terminal amino acid, Xaa-|-Yaa-, in which Xaa is preferably Leu, but may be other amino acids including Pro although not Arg or Lys, and Yaa may be Pro. Amino acid amides and methyl esters are also readily hydrolyzed, but rates on arylamides are exceedingly low.. The catalysed reaction is Release of an N-terminal amino acid, preferentially leucine, but not glutamic or aspartic acids.. In terms of biological role, presumably involved in the processing and regular turnover of intracellular proteins. Catalyzes the removal of unsubstituted N-terminal amino acids from various peptides. This chain is Probable cytosol aminopeptidase, found in Sinorhizobium medicae (strain WSM419) (Ensifer medicae).